The sequence spans 168 residues: Bcl2-associated agonist of cell death (168 aa).

Met1 carries the N-acetylmethionine modification. A disordered region spans residues 1–105; sequence MFQIPEFEPS…RSRSAPPNLW (105 aa). Phosphoserine is present on Ser25. A compositionally biased stretch (polar residues) spans 49–60; sequence SHQQEQPTSSSH. Residues Ser75 and Ser91 each carry the phosphoserine modification. 2 positions are modified to asymmetric dimethylarginine; by PRMT1: Arg94 and Arg96. The residue at position 97 (Ser97) is a Phosphoserine. Position 99 is a phosphoserine; by PKA, PKB, PAK1, RPS6KA1, RPS6KB1 and PKC/PRKCQ (Ser99). Ser99 bears the Phosphoserine; by PKB/AKT1 mark. The short motif at 110–124 is the BH3 element; it reads YGRELRRMSDEFVDS. 2 positions are modified to phosphoserine: Ser118 and Ser134. Residues 125–145 form a disordered region; it reads FKKGLPRPKSAGTATQMRQSS. Residues 136–145 are compositionally biased toward polar residues; it reads GTATQMRQSS. Arg161 carries the omega-N-methylarginine modification.

It belongs to the Bcl-2 family. As to quaternary structure, forms heterodimers with the anti-apoptotic proteins, Bcl-X(L), Bcl-2 and Bcl-W. Also binds protein S100A10. The Ser-75/Ser-99 phosphorylated form binds 14-3-3 proteins. Interacts with AKT1 and PIM3. Interacts (via BH3 domain) with NOL3 (via CARD domain); preventing the association of BAD with BCL2. Interacts with HIF3A (via C-terminus domain); the interaction reduces the binding between BAD and BAX. Interacts with GIMAP3/IAN4 and GIMAP5/IAN5. Phosphorylated on one or more of Ser-75, Ser-99, Ser-118 and Ser-134 in response to survival stimuli, which blocks its pro-apoptotic activity. Phosphorylation on Ser-99 or Ser-75 promotes heterodimerization with 14-3-3 proteins. This interaction then facilitates the phosphorylation at Ser-118, a site within the BH3 motif, leading to the release of Bcl-X(L) and the promotion of cell survival. Ser-99 is the major site of AKT/PKB phosphorylation, Ser-118 the major site of protein kinase A (CAPK) phosphorylation. Phosphorylation at Ser-99 by PKB/AKT1 is almost completely blocked by the apoptotic C-terminus cleavage product of PKN2 generated by caspases-3 activity during apoptosis. Post-translationally, methylation at Arg-94 and Arg-96 by PRMT1 inhibits Akt-mediated phosphorylation at Ser-99. In terms of tissue distribution, expressed in a wide variety of tissues.

It is found in the mitochondrion outer membrane. It localises to the cytoplasm. Its function is as follows. Promotes cell death. Successfully competes for the binding to Bcl-X(L), Bcl-2 and Bcl-W, thereby affecting the level of heterodimerization of these proteins with BAX. Can reverse the death repressor activity of Bcl-X(L), but not that of Bcl-2. Appears to act as a link between growth factor receptor signaling and the apoptotic pathways. The chain is Bcl2-associated agonist of cell death (BAD) from Homo sapiens (Human).